We begin with the raw amino-acid sequence, 569 residues long: Cryptochrome DASH, chloroplastic/mitochondrial (569 aa).

The region spanning 84 to 221 (GVTILWFRND…KLELIWGSTM (138 aa)) is the Photolyase/cryptochrome alpha/beta domain. FAD is bound by residues Tyr316 and 329–333 (STKFS). Arg436 is an ATP binding site. Asp466 and Asp468 together coordinate FAD. Position 485 (Asp485) interacts with ATP. The tract at residues 541–569 (GNGPMAGGSKSGGGFRGSHSGRRSRHNGP) is disordered. A compositionally biased stretch (gly residues) spans 544 to 556 (PMAGGSKSGGGFR). Residues 559 to 569 (HSGRRSRHNGP) show a composition bias toward basic residues.

This sequence belongs to the DNA photolyase class-1 family. As to quaternary structure, homodimer. Requires FAD as cofactor. The cofactor is (6R)-5,10-methylene-5,6,7,8-tetrahydrofolate.

Its subcellular location is the plastid. The protein localises to the chloroplast. The protein resides in the mitochondrion. May have a photoreceptor function. Binds ss- and ds-DNA in a sequence non-specific manner. Has a photolyase activity specific for cyclobutane pyrimidine dimers in ssDNA. The sequence is that of Cryptochrome DASH, chloroplastic/mitochondrial (CRYD) from Arabidopsis thaliana (Mouse-ear cress).